We begin with the raw amino-acid sequence, 307 residues long: GHNDYMCPATNQCTIDKNRRKSCQACRLRKCYEVGMMKGGIRKDRRGGRILKHKRQREEHDNRNAGAIVERRSPNLWPSPLMITHNKKNSPALSLTADQIVSALLEAEPPVVYSEYDPSRPFSEASMMTLLTNLADRELVHMINWAKRVPGFVDLSLHDQVHLLECAWLEILMIGLVWRSVEHPGKLLFAPNLLLDRNQGKCVEGFVEIFDMLLATSSRFRMMNVQGEEFVCLKSIILLNSGIYTFLSSTLKSLEEKDHIHRVLDKIIDTLLHLMAKSGLSLQQQHRRLAQLLLILSHFRHMSNKGM.

Residues 1–43 (GHNDYMCPATNQCTIDKNRRKSCQACRLRKCYEVGMMKGGIRK) constitute a DNA-binding region (nuclear receptor). An NR C4-type zinc finger spans residues 7–31 (CPATNQCTIDKNRRKSCQACRLRKC). The segment at 44 to 95 (DRRGGRILKHKRQREEHDNRNAGAIVERRSPNLWPSPLMITHNKKNSPALSL) is hinge. The region spanning 96–307 (TADQIVSALL…HFRHMSNKGM (212 aa)) is the NR LBD domain.

This sequence belongs to the nuclear hormone receptor family. NR3 subfamily. Binds DNA as a homodimer. Can form a heterodimer with ER-beta.

It localises to the nucleus. Its function is as follows. The steroid hormones and their receptors are involved in the regulation of eukaryotic gene expression and affect cellular proliferation and differentiation in target tissues. The chain is Estrogen receptor (ESR1) from Aspidoscelis uniparens (Desert grassland whiptail lizard).